The chain runs to 749 residues: Phosphate-regulating neutral endopeptidase PHEX (749 aa).

The Cytoplasmic segment spans residues Met-1–Arg-20. Residues Ile-21 to Ser-41 form a helical; Signal-anchor for type II membrane protein membrane-spanning segment. Topologically, residues Gln-42–Gly-641 are extracellular. The region spanning Tyr-53 to Trp-749 is the Peptidase M13 domain. Cys-54 and Cys-59 are disulfide-bonded. N-linked (GlcNAc...) asparagine glycans are attached at residues Asn-71, Asn-238, Asn-263, Asn-290, Asn-301, Asn-377, and Asn-484. 4 disulfides stabilise this stretch: Cys-77–Cys-733, Cys-85–Cys-693, Cys-142–Cys-406, and Cys-617–Cys-746. Residue His-580 coordinates Zn(2+). Glu-581 is a catalytic residue. 2 residues coordinate Zn(2+): His-584 and Glu-642. Asp-646 acts as the Proton donor in catalysis. N-linked (GlcNAc...) asparagine glycosylation is present at Asn-736.

The protein belongs to the peptidase M13 family. As to quaternary structure, interacts with MEPE; the interaction is zinc-dependent (via ASARM motif). Zn(2+) serves as cofactor. In terms of tissue distribution, specifically expressed in ovary. Expressed at low levels in kidney.

Its subcellular location is the cell membrane. Its function is as follows. Peptidase that cleaves SIBLING (small integrin-binding ligand, N-linked glycoprotein)-derived ASARM peptides, thus regulating their biological activity. Cleaves ASARM peptides between Ser and Glu or Asp residues. Regulates osteogenic cell differentiation and bone mineralization through the cleavage of the MEPE-derived ASARM peptide. Promotes dentin mineralization and renal phosphate reabsorption by cleaving DMP1- and MEPE-derived ASARM peptides. Inhibits the cleavage of MEPE by CTSB/cathepsin B thus preventing MEPE degradation. In Homo sapiens (Human), this protein is Phosphate-regulating neutral endopeptidase PHEX (PHEX).